The chain runs to 373 residues: Securin (373 aa).

The segment covering 1 to 10 (MMPANEDKEN) has biased composition (basic and acidic residues). The tract at residues 1 to 27 (MMPANEDKENNIVYTGNESSGINFPQT) is disordered. Residues 12–26 (IVYTGNESSGINFPQ) are compositionally biased toward polar residues. Positions 85–88 (RLPL) match the D-box motif. The interval 177–278 (ADSGKNEESS…LPYVPEGYSP (102 aa)) is disordered. Serine 185, serine 186, serine 212, and serine 213 each carry phosphoserine. The segment covering 185–194 (SSDDDEGNED) has biased composition (acidic residues). The segment covering 225–235 (LFNEQGGLQQL) has biased composition (low complexity). Basic and acidic residues predominate over residues 240–256 (TKNEQKTKNDKSDKTDD). A Phosphoserine modification is found at serine 277. Serine 292 is subject to Phosphoserine; by CDC28.

Belongs to the securin family. Interacts with the caspase-like ESP1, and prevents its protease activity probably by covering its active site. Interacts with CDC20. Phosphorylated by CDC28. The phosphorylation may be important for ESP1 localization to the nucleus. In terms of processing, ubiquitinated by the anaphase promoting complex (APC) at the onset of anaphase, conducting to its degradation.

It localises to the cytoplasm. The protein resides in the nucleus. In terms of biological role, regulatory protein, which plays a central role in chromosome stability. Probably acts by blocking the action of key proteins. During the mitosis, it blocks Separase/ESP1 function, preventing the proteolysis of the cohesin complex and the subsequent segregation of the chromosomes. At the onset of anaphase, it is ubiquitinated, conducting to its destruction and to the liberation of ESP1. This chain is Securin (PDS1), found in Saccharomyces cerevisiae (strain ATCC 204508 / S288c) (Baker's yeast).